The primary structure comprises 476 residues: Aspartyl/glutamyl-tRNA(Asn/Gln) amidotransferase subunit B (476 aa).

This sequence belongs to the GatB/GatE family. GatB subfamily. In terms of assembly, heterotrimer of A, B and C subunits.

The enzyme catalyses L-glutamyl-tRNA(Gln) + L-glutamine + ATP + H2O = L-glutaminyl-tRNA(Gln) + L-glutamate + ADP + phosphate + H(+). It catalyses the reaction L-aspartyl-tRNA(Asn) + L-glutamine + ATP + H2O = L-asparaginyl-tRNA(Asn) + L-glutamate + ADP + phosphate + 2 H(+). In terms of biological role, allows the formation of correctly charged Asn-tRNA(Asn) or Gln-tRNA(Gln) through the transamidation of misacylated Asp-tRNA(Asn) or Glu-tRNA(Gln) in organisms which lack either or both of asparaginyl-tRNA or glutaminyl-tRNA synthetases. The reaction takes place in the presence of glutamine and ATP through an activated phospho-Asp-tRNA(Asn) or phospho-Glu-tRNA(Gln). This is Aspartyl/glutamyl-tRNA(Asn/Gln) amidotransferase subunit B from Lactobacillus johnsonii (strain CNCM I-12250 / La1 / NCC 533).